We begin with the raw amino-acid sequence, 216 residues long: Probable GTP-binding protein EngB (216 aa).

An EngB-type G domain is found at 27 to 201 (EGIEVAFAGR…SQKLNTWFNE (175 aa)). Residues 35–42 (GRSNAGKS), 62–66 (GRTQL), 80–83 (DLPG), 147–150 (TKAD), and 180–182 (FSS) contribute to the GTP site. Positions 42 and 64 each coordinate Mg(2+).

Belongs to the TRAFAC class TrmE-Era-EngA-EngB-Septin-like GTPase superfamily. EngB GTPase family. The cofactor is Mg(2+).

Its function is as follows. Necessary for normal cell division and for the maintenance of normal septation. This Serratia proteamaculans (strain 568) protein is Probable GTP-binding protein EngB.